A 21-amino-acid polypeptide reads, in one-letter code: Protein YliM (21 aa).

The sequence is that of Protein YliM from Escherichia coli (strain K12).